The sequence spans 309 residues: Mitogen-activated protein kinase kinase 8 (309 aa).

A Protein kinase domain is found at 53–305 (LDRISVLGSG…ASQLLNHPFL (253 aa)). ATP is bound by residues 59–67 (LGSGNGGTV) and lysine 82. The active-site Proton acceptor is the aspartate 167. Phosphoserine is present on residues serine 195 and serine 201. Threonine 205 is subject to Phosphothreonine.

This sequence belongs to the protein kinase superfamily. STE Ser/Thr protein kinase family. MAP kinase kinase subfamily. Phosphorylation at Ser-195 and Ser-201 by MAP kinase kinase kinases positively regulates kinase activity.

The enzyme catalyses L-seryl-[protein] + ATP = O-phospho-L-seryl-[protein] + ADP + H(+). It carries out the reaction L-threonyl-[protein] + ATP = O-phospho-L-threonyl-[protein] + ADP + H(+). It catalyses the reaction L-tyrosyl-[protein] + ATP = O-phospho-L-tyrosyl-[protein] + ADP + H(+). In Arabidopsis thaliana (Mouse-ear cress), this protein is Mitogen-activated protein kinase kinase 8 (MKK8).